Here is a 204-residue protein sequence, read N- to C-terminus: Tetraspanin-13 (204 aa).

Residues 1–19 are Cytoplasmic-facing; sequence MVCGGFSCSKNCLCALNLL. A helical transmembrane segment spans residues 20–40; that stretch reads YTLVSLLLIGIAAWGIGFGLI. The Extracellular portion of the chain corresponds to 41-44; it reads SSLR. The chain crosses the membrane as a helical span at residues 45–65; sequence VVGVVIAVGIFLFLIALVGLI. Residues 66 to 72 are Cytoplasmic-facing; the sequence is GAVKHHQ. The helical transmembrane segment at 73–93 threads the bilayer; sequence VLLFFYMIILLLVFIVQFSVS. Residues 94 to 167 are Extracellular-facing; sequence CACLALNREQ…IGEYAGEVLR (74 aa). 2 N-linked (GlcNAc...) asparagine glycosylation sites follow: N113 and N137. S143 bears the Phosphoserine mark. Residues 168 to 188 form a helical membrane-spanning segment; sequence FVGGIGLFFSFTEILGVWLTY. Residues 189–204 are Cytoplasmic-facing; the sequence is RYRNQKDPRANPSAFL.

Belongs to the tetraspanin (TM4SF) family.

Its subcellular location is the membrane. This Rattus norvegicus (Rat) protein is Tetraspanin-13 (Tspan13).